Here is a 272-residue protein sequence, read N- to C-terminus: Dermonecrotic toxin StSicTox-betaIF1 (272 aa).

His5 is an active-site residue. 2 residues coordinate Mg(2+): Glu25 and Asp27. Catalysis depends on His41, which acts as the Nucleophile. 2 cysteine pairs are disulfide-bonded: Cys45–Cys51 and Cys47–Cys189. Asp85 is a binding site for Mg(2+).

This sequence belongs to the arthropod phospholipase D family. Class II subfamily. Mg(2+) serves as cofactor. In terms of tissue distribution, expressed by the venom gland.

It is found in the secreted. It carries out the reaction an N-(acyl)-sphingosylphosphocholine = an N-(acyl)-sphingosyl-1,3-cyclic phosphate + choline. The enzyme catalyses an N-(acyl)-sphingosylphosphoethanolamine = an N-(acyl)-sphingosyl-1,3-cyclic phosphate + ethanolamine. The catalysed reaction is a 1-acyl-sn-glycero-3-phosphocholine = a 1-acyl-sn-glycero-2,3-cyclic phosphate + choline. It catalyses the reaction a 1-acyl-sn-glycero-3-phosphoethanolamine = a 1-acyl-sn-glycero-2,3-cyclic phosphate + ethanolamine. In terms of biological role, dermonecrotic toxins cleave the phosphodiester linkage between the phosphate and headgroup of certain phospholipids (sphingolipid and lysolipid substrates), forming an alcohol (often choline) and a cyclic phosphate. This toxin acts on sphingomyelin (SM). It may also act on ceramide phosphoethanolamine (CPE), lysophosphatidylcholine (LPC) and lysophosphatidylethanolamine (LPE), but not on lysophosphatidylserine (LPS), and lysophosphatidylglycerol (LPG). It acts by transphosphatidylation, releasing exclusively cyclic phosphate products as second products. Induces dermonecrosis, hemolysis, increased vascular permeability, edema, inflammatory response, and platelet aggregation. The polypeptide is Dermonecrotic toxin StSicTox-betaIF1 (Sicarius terrosus (Cave spider)).